The sequence spans 176 residues: Cell division protein ZapC (176 aa).

It belongs to the ZapC family. Interacts directly with FtsZ.

It localises to the cytoplasm. Contributes to the efficiency of the cell division process by stabilizing the polymeric form of the cell division protein FtsZ. Acts by promoting interactions between FtsZ protofilaments and suppressing the GTPase activity of FtsZ. The protein is Cell division protein ZapC of Pseudoalteromonas translucida (strain TAC 125).